The following is a 693-amino-acid chain: Guanyl-specific ribonuclease pgl-3 (693 aa).

The interval 205 to 447 is involved in dimerization; it reads KKLMIEGPKI…VNRIIESLEK (243 aa). His-437 functions as the Proton acceptor in the catalytic mechanism. 3 disordered regions span residues 445–468, 523–591, and 620–693; these read LEKS…GPTT, AEKN…DATP, and SSNG…RGGS. A compositionally biased stretch (low complexity) spans 447 to 468; that stretch reads KSSSSEPSATAKQTTTSNGPTT. Composition is skewed to polar residues over residues 528-548 and 569-580; these read NTPS…SPTK and ITKVSPQPQERT. The required for interaction with sepa-1 stretch occupies residues 581-614; that stretch reads GTAWGSGDATPVPLATPVNEYKVSGFGAAPVASG. Gly residues-rich tracts occupy residues 625–634, 641–660, and 668–693; these read SGRGSYGGGR, RGAY…SRGY, and RGSY…RGGS. The tract at residues 633 to 693 is RNA-binding RGG-box; the sequence is GRGGDRGGRG…GFFGGSRGGS (61 aa).

As to quaternary structure, may form a homodimer. Interacts with pgl-1 and pgl-2; this association is not required for P-granule localization of either pgl-1 or pgl-2. Interacts with sepa-1; the interaction is enhanced in the presence of RNA. Interacts with prmt-1; the interaction is direct. Methylated at arginine residues in the RNA-binding RGG-box by prmt-1. Methylation promotes P-granule degradation by autophagy. In terms of tissue distribution, highly expressed in the germline. Expressed in most somatic cells.

The protein localises to the cytoplasmic granule. It carries out the reaction [RNA] containing guanosine + H2O = an [RNA fragment]-3'-guanosine-3'-phosphate + a 5'-hydroxy-ribonucleotide-3'-[RNA fragment].. Guanyl-specific endoribonuclease which cleaves the phosphodiester bond in single-stranded RNA between the 3'-guanylic residue and the 5'-OH residue of adjacent nucleotide, resulting in the formation of a corresponding 2',3'-cyclic phosphate intermediate. P-granule component involved in germline development. Together with the P-granule component pgl-1, is involved in the formation of P-granules. Together with pgl-1, probably recruits other granule components such as pos-1, mex-3 and glh-1, and RNA to P-granules. In vitro, binds mRNA; this interaction is required for the formation of liquid-like droplets that resemble P-granules. Most likely recruits pgl-1 into P-granules during autophagy. Associates with adapters such as sepa-1 and is required for the accumulation and degradation of P-granules by autophagy in somatic cells. This ensures exclusive localization of the P-granules in germ cells. In addition, may act redundantly with pgl-1 to protect germ cells from excessive germline apoptosis during normal oogenesis and development of the two gonadal arms. This may in part be through regulating the localization of sir-2.1 which is involved in germ cell apoptosis. May protect somatic cells from excessive apoptosis during normal development. This Caenorhabditis elegans protein is Guanyl-specific ribonuclease pgl-3.